The following is a 179-amino-acid chain: MRIEVWQGDITQLDVDVIVNAANESLLGGGGVDGAIHRAAGPRLLEACEALPEVRPGVRCPTGEIRITDGFDLKARHIFHTVGPVWRDGKHNEPEQLANCYWQSLKLAEQMMLHSIAFPAISCGIYGYPLYQAARIAVTETRDWQRSHKVPKHIVLVAYNEATYKAYHQALATQETAAA.

Residues 1 to 175 (MRIEVWQGDI…AYHQALATQE (175 aa)) enclose the Macro domain.

Belongs to the MacroD-type family.

This chain is Macro domain-containing protein XCC3184, found in Xanthomonas campestris pv. campestris (strain ATCC 33913 / DSM 3586 / NCPPB 528 / LMG 568 / P 25).